We begin with the raw amino-acid sequence, 214 residues long: 14-3-3 protein homolog 2 (214 aa).

This sequence belongs to the 14-3-3 family.

The protein is 14-3-3 protein homolog 2 of Schistosoma mansoni (Blood fluke).